The following is a 392-amino-acid chain: Tyrosine--tRNA ligase (392 aa).

The 'HIGH' region signature appears at 39 to 48 (PTAPDIHIGH). The short motif at 223-227 (KMSKS) is the 'KMSKS' region element. Lys226 provides a ligand contact to ATP. The S4 RNA-binding domain occupies 331–391 (IGIAQLLKQA…GKRRFARVVL (61 aa)).

Belongs to the class-I aminoacyl-tRNA synthetase family. TyrS type 2 subfamily. As to quaternary structure, homodimer.

The protein localises to the cytoplasm. The enzyme catalyses tRNA(Tyr) + L-tyrosine + ATP = L-tyrosyl-tRNA(Tyr) + AMP + diphosphate + H(+). Functionally, catalyzes the attachment of tyrosine to tRNA(Tyr) in a two-step reaction: tyrosine is first activated by ATP to form Tyr-AMP and then transferred to the acceptor end of tRNA(Tyr). The polypeptide is Tyrosine--tRNA ligase (Ralstonia nicotianae (strain ATCC BAA-1114 / GMI1000) (Ralstonia solanacearum)).